The primary structure comprises 361 residues: Phenylalanine--tRNA ligase alpha subunit (361 aa).

Mg(2+) is bound at residue E260.

It belongs to the class-II aminoacyl-tRNA synthetase family. Phe-tRNA synthetase alpha subunit type 1 subfamily. Tetramer of two alpha and two beta subunits. The cofactor is Mg(2+).

The protein resides in the cytoplasm. It carries out the reaction tRNA(Phe) + L-phenylalanine + ATP = L-phenylalanyl-tRNA(Phe) + AMP + diphosphate + H(+). The polypeptide is Phenylalanine--tRNA ligase alpha subunit (Chelativorans sp. (strain BNC1)).